The following is a 631-amino-acid chain: Phosphomethylpyrimidine synthase (631 aa).

Substrate is bound by residues asparagine 239, methionine 268, tyrosine 297, histidine 333, 353–355, 394–397, and glutamate 433; these read SRG and DGLR. Histidine 437 contributes to the Zn(2+) binding site. A substrate-binding site is contributed by tyrosine 460. Position 501 (histidine 501) interacts with Zn(2+). Residues cysteine 581, cysteine 584, and cysteine 589 each contribute to the [4Fe-4S] cluster site.

It belongs to the ThiC family. Homodimer. [4Fe-4S] cluster serves as cofactor.

The enzyme catalyses 5-amino-1-(5-phospho-beta-D-ribosyl)imidazole + S-adenosyl-L-methionine = 4-amino-2-methyl-5-(phosphooxymethyl)pyrimidine + CO + 5'-deoxyadenosine + formate + L-methionine + 3 H(+). It functions in the pathway cofactor biosynthesis; thiamine diphosphate biosynthesis. Catalyzes the synthesis of the hydroxymethylpyrimidine phosphate (HMP-P) moiety of thiamine from aminoimidazole ribotide (AIR) in a radical S-adenosyl-L-methionine (SAM)-dependent reaction. This chain is Phosphomethylpyrimidine synthase, found in Escherichia coli O81 (strain ED1a).